A 277-amino-acid chain; its full sequence is Reaction center protein L chain (277 aa).

3 helical membrane-spanning segments follow: residues 30 to 52 (FYVGIFGVMTVFFALIGIALIAW), 84 to 106 (GGIWQWVSICATGAFVTWALREV), and 113 to 135 (GIGFHVPFAFSFAIFAYVTLVVI). H154 and H174 together coordinate (7R,8Z)-bacteriochlorophyll b. A helical transmembrane segment spans residues 173–195 (AHMIAITFFFTTCLALALHGGLV). Residue H191 participates in Fe cation binding. F217 serves as a coordination point for a ubiquinone. Residue H231 coordinates Fe cation. A helical membrane pass occupies residues 233–255 (LGLFLALSAVFFSAVCMIISGPV).

This sequence belongs to the reaction center PufL/M/PsbA/D family. Reaction center is composed of four bacteriochlorophylls, two bacteriopheophytins, two ubiquinones, one iron, and three highly hydrophobic polypeptide chains (designated L, M, and H).

It is found in the cellular chromatophore membrane. The reaction center is a membrane-bound complex that mediates the initial photochemical event in the electron transfer process of photosynthesis. This is Reaction center protein L chain (pufL) from Rhodopseudomonas palustris (strain ATCC BAA-98 / CGA009).